Consider the following 1591-residue polypeptide: Rho guanine nucleotide exchange factor TIAM1 (1591 aa).

Residues 1-70 (MGNAESQNVD…TPSIPQSLAE (70 aa)) form a disordered region. Residue G2 is the site of N-myristoyl glycine attachment. A compositionally biased stretch (basic and acidic residues) spans 8–19 (NVDHEFYGEKHA). A compositionally biased stretch (basic residues) spans 20–49 (SLGRKHTSRSLRLSHKTRRTRHASSGKAIH). Over residues 53-67 (EVSTRSSSTPSIPQS) the composition is skewed to low complexity. Phosphoserine is present on residues S231, S356, and S358. 2 disordered regions span residues 305–380 (QISL…DRAR) and 393–422 (MSTT…SPGQ). The segment covering 340–359 (TTDTDLLSRRSNATNSSYSP) has biased composition (polar residues). Over residues 367 to 376 (GSDSGSSSTG) the composition is skewed to low complexity. A compositionally biased stretch (polar residues) spans 412–422 (QSSGTLSSPGQ). One can recognise a PH 1 domain in the interval 434 to 549 (VRKAGALAVK…TAIHSACAAA (116 aa)). S695 is modified (phosphoserine). One can recognise an RBD domain in the interval 765–832 (TPSWFCLPNN…QPEEDIYELL (68 aa)). Residue Y829 is modified to Phosphotyrosine; by NTRK2. One can recognise a PDZ domain in the interval 845 to 908 (NIHIEKSDAA…NNRAAGTLNS (64 aa)). Positions 933-1034 (GVELLENPPH…TSPQLATTRQ (102 aa)) are disordered. Over residues 958-975 (LTSNPGHSLSSEQGSSAE) the composition is skewed to polar residues. Positions 977-990 (APEEGEGPDLESSD) are enriched in acidic residues. Over residues 1014–1028 (PSDSSPSPQDATSPQ) the composition is skewed to low complexity. The DH domain occupies 1040–1234 (KLRKVICELL…NKVASHINEM (195 aa)). Positions 1261-1397 (DLSMGDLLLH…KSVHSILRDK (137 aa)) constitute a PH 2 domain. Y1323 bears the Phosphotyrosine mark. Glycyl lysine isopeptide (Lys-Gly) (interchain with G-Cter in ubiquitin) cross-links involve residues K1404 and K1420. The disordered stretch occupies residues 1456–1481 (TIDSDAISASSPEKEPQQPAGGGDTD). S1519 is subject to Phosphoserine.

It belongs to the TIAM family. As to quaternary structure, component of the Par polarity complex, composed of at least phosphorylated PRKCZ, PARD3 and TIAM1. Interacts with BAIAP2. Interacts (via PDZ domain) with CNTNAP4, SDC1 and SDC3 (via C-terminus). Interacts with CD44, PARD3 and MAPK8IP2. Interacts with EPHA8; regulates clathrin-mediated endocytosis of EPHA8. Interacts with NTRK2; mediates the activation of RAC1 by BDNF. Ubiquitinated. Undergoes 'Lys-48' ubiquitination at Lys-1404 and Lys-1420 by a CUL3(KBTBD6/7) E3 ubiquitin ligase complex composed of CUL3, RBX1, KBTBD6 and KBTBD7. 'Lys-48' ubiquitination at Lys-1404 and Lys-1420 triggers proteasomal degradation. Ubiquitination at Lys-1404 and Lys-1420 by CUL3(KBTBD6/7) also requires the membrane-associated protein GABARAP and may therefore be spatially restricted within the cell. As to expression, highly expressed in brain and testis and at low or moderate levels in almost all other normal tissues. Found in virtually all analyzed tumor cell lines including B- and T-lymphomas, neuroblastomas, melanomas and carcinomas.

It localises to the cell junction. Its subcellular location is the cell membrane. Its function is as follows. Guanyl-nucleotide exchange factor that activates RHO-like proteins and connects extracellular signals to cytoskeletal activities. Activates RAC1, CDC42, and to a lesser extent RHOA and their downstream signaling to regulate processes like cell adhesion and cell migration. The polypeptide is Rho guanine nucleotide exchange factor TIAM1 (Mus musculus (Mouse)).